The following is a 376-amino-acid chain: Cellular tumor antigen p53 (376 aa).

The interval 1 to 36 (MEGNGERDTMMVEPPDSQEFAELWLRNLIVRDNSLW) is transcription activation (acidic). Residues 77-268 (DYPGLLNFTL…KTEESNFKKQ (192 aa)) mediate DNA binding. The segment covering 150-159 (RCPHHERSND) has biased composition (basic and acidic residues). A disordered region spans residues 150–171 (RCPHHERSNDSSDGPAPPGHLL). The Zn(2+) site is built by C151, H154, C214, and C218. The interaction with DNA stretch occupies residues 249-256 (RVCACPGR). Composition is skewed to basic and acidic residues over residues 257–270 (DRKTEESNFKKQQE) and 282–294 (SMKDPPSHPEASK). Residues 257-306 (DRKTEESNFKKQQEPKTSGKTLTKRSMKDPPSHPEASKKSKNSSSDDEIY) are disordered. Positions 280–297 (KRSMKDPPSHPEASKKSK) match the Bipartite nuclear localization signal motif. An oligomerization region spans residues 303–334 (DEIYTLQVRGKERYEFLKKINDGLELSDVVPP). The short motif at 317–328 (EFLKKINDGLEL) is the Nuclear export signal element. The segment at 342-376 (QKLLSKTCRKERDGAAGEPKRGKKRLVKEEKCDSD) is disordered. A basic (repression of DNA-binding) region spans residues 347-372 (KTCRKERDGAAGEPKRGKKRLVKEEK). Positions 349 to 361 (CRKERDGAAGEPK) are enriched in basic and acidic residues.

Belongs to the p53 family. Binds DNA as a homotetramer. Requires Zn(2+) as cofactor.

It is found in the cytoplasm. It localises to the nucleus. In terms of biological role, multifunctional transcription factor that induces cell cycle arrest, DNA repair or apoptosis upon binding to its target DNA sequence. Acts as a tumor suppressor in many tumor types; induces growth arrest or apoptosis depending on the physiological circumstances and cell type. Negatively regulates cell division by controlling expression of a set of genes required for this process. One of the activated genes is an inhibitor of cyclin-dependent kinases. Apoptosis induction seems to be mediated either by stimulation of BAX and FAS antigen expression, or by repression of Bcl-2 expression. In Ictalurus punctatus (Channel catfish), this protein is Cellular tumor antigen p53 (tp53).